The following is a 97-amino-acid chain: MAKTASPGATPPGNGTEPLPDNYEMALAELETLVARMEGGALSLEDSLAAYRRGATLVAFCQQQLEKVEQQVRVLDGATLKPLSSGTAATDGEDDDL.

The tract at residues 1 to 22 (MAKTASPGATPPGNGTEPLPDN) is disordered.

It belongs to the XseB family. As to quaternary structure, heterooligomer composed of large and small subunits.

It is found in the cytoplasm. It catalyses the reaction Exonucleolytic cleavage in either 5'- to 3'- or 3'- to 5'-direction to yield nucleoside 5'-phosphates.. Functionally, bidirectionally degrades single-stranded DNA into large acid-insoluble oligonucleotides, which are then degraded further into small acid-soluble oligonucleotides. This is Exodeoxyribonuclease 7 small subunit from Burkholderia cenocepacia (strain HI2424).